Reading from the N-terminus, the 757-residue chain is Centrosomal protein of 68 kDa (757 aa).

Basic and acidic residues-rich tracts occupy residues 1-17 and 86-96; these read MALGEEKAEAEASEDTK and ANREPVAERSE. Disordered regions lie at residues 1–47, 67–158, 192–259, 311–480, 509–551, and 597–618; these read MALG…RLEA, WIGT…PSLA, QPSS…GGDA, PGPQ…ESDD, PTGD…SGDP, and LDRWPFSDPDVEGQLPRKGGEQ. Residues 125 to 144 show a composition bias toward polar residues; sequence LSSSEEFPQTLSLPRTTTIC. Low complexity-rich tracts occupy residues 192–206 and 224–240; these read QPSSCSISASSTGSS and VSSSLEPVVPQEPSSVV. Phosphoserine; by PLK1 is present on serine 332. Residues 339-355 show a composition bias toward polar residues; it reads FSVSPASTLKSPTNVSP. 2 stretches are compositionally biased toward basic and acidic residues: residues 405 to 432 and 439 to 456; these read GSRDARWERREPALRGAKDRLTIGKHLD and RTRDRGWPSPRPEREKRT. Over residues 457 to 467 the composition is skewed to polar residues; the sequence is SQSARRPTCTE. Phosphoserine occurs at positions 472 and 478. Residues 524–543 show a composition bias toward low complexity; it reads SDGPASFPSSSSQSQLPPGA.

Interacts with CNTLN; the interaction recruits CEP68 to the centrosome. Interacts with the SCF(FBXW11) complex which contains SKP1, CUL1 and FBXW11; the interaction is probably mediated by FBXW11 and the complex also contains CDK5RAP2 and PCNT. Also interacts with F-box protein BTRC. Interacts with serine/threonine-protein kinase PLK1; the interaction leads to phosphorylation of CEP68 and its subsequent degradation. Interacts with NEK2; the interaction leads to phosphorylation of CEP68. Post-translationally, phosphorylation by PLK1 is required for binding to BTRC in prometaphase. Phosphorylated directly or indirectly by NEK2. NEK2-mediated phosphorylation promotes CEP68 dissociation from the centrosome and its degradation at the onset of mitosis. In terms of processing, ubiquitinated and targeted for proteasomal degradation in early mitosis by the SCF(BTRC) and/or SCF(FBXW11) E3 ubiquitin-protein ligase complexes. Degradation is complete by prometaphase and is required for removal of CDK5RAP2 from the peripheral pericentriolar material and subsequent centriole separation.

The protein localises to the cytoplasm. Its subcellular location is the cytoskeleton. The protein resides in the microtubule organizing center. It localises to the centrosome. In terms of biological role, involved in maintenance of centrosome cohesion, probably as part of a linker structure which prevents centrosome splitting. Required for localization of CDK5RAP2 to the centrosome during interphase. Contributes to CROCC/rootletin filament formation. The protein is Centrosomal protein of 68 kDa (CEP68) of Homo sapiens (Human).